We begin with the raw amino-acid sequence, 462 residues long: Fumarate hydratase class II (462 aa).

Residues 97-99 (SGT), 128-131 (HPND), 138-140 (STN), and Thr-186 contribute to the substrate site. The active-site Proton donor/acceptor is the His-187. Ser-317 is a catalytic residue. Substrate-binding positions include Ser-318 and 323-325 (KVN).

It belongs to the class-II fumarase/aspartase family. Fumarase subfamily. As to quaternary structure, homotetramer.

The protein localises to the cytoplasm. It catalyses the reaction (S)-malate = fumarate + H2O. It functions in the pathway carbohydrate metabolism; tricarboxylic acid cycle; (S)-malate from fumarate: step 1/1. Its function is as follows. Involved in the TCA cycle. Catalyzes the stereospecific interconversion of fumarate to L-malate. The chain is Fumarate hydratase class II from Neisseria meningitidis serogroup A / serotype 4A (strain DSM 15465 / Z2491).